Reading from the N-terminus, the 80-residue chain is MNLKVLAVFVLCAILVVVTAERRGTETGVYKKDTLQDLIKRTRNCIDRFPTGTCKQVKKGGSCKNSDKYRMNCRKTCGLC.

The first 20 residues, 1–20 (MNLKVLAVFVLCAILVVVTA), serve as a signal peptide directing secretion. Positions 21-39 (ERRGTETGVYKKDTLQDLI) are excised as a propeptide. A ShKT domain is found at 45–80 (CIDRFPTGTCKQVKKGGSCKNSDKYRMNCRKTCGLC). 3 disulfide bridges follow: C45–C80, C54–C73, and C63–C77. A crucial for binding to potassium channels region spans residues 68 to 69 (KY).

The protein belongs to the sea anemone type 1 potassium channel toxin family. Type 1b subfamily.

It is found in the secreted. Its subcellular location is the nematocyst. Its function is as follows. Inhibits voltage-gated potassium channels (Kv1/KCNA). This chain is U-actitoxin-Avd9a, found in Anemonia viridis (Snakelocks anemone).